Here is a 207-residue protein sequence, read N- to C-terminus: Large ribosomal subunit protein bL25 (207 aa).

It belongs to the bacterial ribosomal protein bL25 family. CTC subfamily. Part of the 50S ribosomal subunit; part of the 5S rRNA/L5/L18/L25 subcomplex. Contacts the 5S rRNA. Binds to the 5S rRNA independently of L5 and L18.

Functionally, this is one of the proteins that binds to the 5S RNA in the ribosome where it forms part of the central protuberance. The sequence is that of Large ribosomal subunit protein bL25 from Orientia tsutsugamushi (strain Boryong) (Rickettsia tsutsugamushi).